The following is a 117-amino-acid chain: Large ribosomal subunit protein bL20 (117 aa).

The protein belongs to the bacterial ribosomal protein bL20 family.

In terms of biological role, binds directly to 23S ribosomal RNA and is necessary for the in vitro assembly process of the 50S ribosomal subunit. It is not involved in the protein synthesizing functions of that subunit. This is Large ribosomal subunit protein bL20 from Leptospira interrogans serogroup Icterohaemorrhagiae serovar copenhageni (strain Fiocruz L1-130).